We begin with the raw amino-acid sequence, 306 residues long: Ornithine carbamoyltransferase (306 aa).

Carbamoyl phosphate-binding positions include 53–56 (STRT), Gln80, Arg104, and 131–134 (HPCQ). L-ornithine is bound by residues Asn162, Asp220, and 224–225 (SM). Carbamoyl phosphate-binding positions include 260-261 (CL) and Arg288.

Belongs to the aspartate/ornithine carbamoyltransferase superfamily. OTCase family.

It is found in the cytoplasm. The enzyme catalyses carbamoyl phosphate + L-ornithine = L-citrulline + phosphate + H(+). It functions in the pathway amino-acid biosynthesis; L-arginine biosynthesis; L-arginine from L-ornithine and carbamoyl phosphate: step 1/3. Reversibly catalyzes the transfer of the carbamoyl group from carbamoyl phosphate (CP) to the N(epsilon) atom of ornithine (ORN) to produce L-citrulline. The protein is Ornithine carbamoyltransferase of Methylobacillus flagellatus (strain ATCC 51484 / DSM 6875 / VKM B-1610 / KT).